Reading from the N-terminus, the 248-residue chain is Small ribosomal subunit protein uS3 (248 aa).

Residues 39-108 (IRKLVSQKLA…TVAVNVAEIP (70 aa)) enclose the KH type-2 domain. Positions 212–248 (KTETLARPPRKSDERRREDGERPSRRRPTARRRPGGE) are disordered. Residues 221–234 (RKSDERRREDGERP) show a composition bias toward basic and acidic residues. Basic residues predominate over residues 235-248 (SRRRPTARRRPGGE).

The protein belongs to the universal ribosomal protein uS3 family. Part of the 30S ribosomal subunit. Forms a tight complex with proteins S10 and S14.

Its function is as follows. Binds the lower part of the 30S subunit head. Binds mRNA in the 70S ribosome, positioning it for translation. This Deinococcus geothermalis (strain DSM 11300 / CIP 105573 / AG-3a) protein is Small ribosomal subunit protein uS3.